The primary structure comprises 467 residues: Cysteine--tRNA ligase (467 aa).

Cys28 is a binding site for Zn(2+). The 'HIGH' region signature appears at 30–40 (MTVYDYCHLGH). Zn(2+) is bound by residues Cys209, His234, and Glu238. Residues 266–270 (KMSKS) carry the 'KMSKS' region motif. Lys269 contacts ATP.

The protein belongs to the class-I aminoacyl-tRNA synthetase family. In terms of assembly, monomer. Requires Zn(2+) as cofactor.

Its subcellular location is the cytoplasm. The catalysed reaction is tRNA(Cys) + L-cysteine + ATP = L-cysteinyl-tRNA(Cys) + AMP + diphosphate. In Hahella chejuensis (strain KCTC 2396), this protein is Cysteine--tRNA ligase.